We begin with the raw amino-acid sequence, 299 residues long: Probable lipid kinase YegS (299 aa).

The DAGKc domain occupies 2-133 (AEFPASLLIL…IDMAQVNKQT (132 aa)). ATP-binding positions include T40, 66–72 (GDGTINE), and T95. Mg(2+)-binding residues include L215, D218, and L220. Catalysis depends on E271, which acts as the Proton acceptor.

The protein belongs to the diacylglycerol/lipid kinase family. YegS lipid kinase subfamily. Mg(2+) serves as cofactor. It depends on Ca(2+) as a cofactor.

The protein resides in the cytoplasm. Probably phosphorylates lipids; the in vivo substrate is unknown. The sequence is that of Probable lipid kinase YegS from Escherichia coli O127:H6 (strain E2348/69 / EPEC).